Consider the following 620-residue polypeptide: Methionine--tRNA ligase (620 aa).

Residues 11–21 (PYANGPRHIGH) carry the 'HIGH' region motif. Positions 143, 146, 156, and 159 each coordinate Zn(2+). Residues 347 to 351 (KFSSS) carry the 'KMSKS' region motif. An ATP-binding site is contributed by Ser350.

Belongs to the class-I aminoacyl-tRNA synthetase family. MetG type 1 subfamily. As to quaternary structure, monomer. Zn(2+) serves as cofactor.

The protein resides in the cytoplasm. It carries out the reaction tRNA(Met) + L-methionine + ATP = L-methionyl-tRNA(Met) + AMP + diphosphate. Its function is as follows. Is required not only for elongation of protein synthesis but also for the initiation of all mRNA translation through initiator tRNA(fMet) aminoacylation. This is Methionine--tRNA ligase from Bifidobacterium adolescentis (strain ATCC 15703 / DSM 20083 / NCTC 11814 / E194a).